We begin with the raw amino-acid sequence, 263 residues long: Ribosomal RNA small subunit methyltransferase J (263 aa).

S-adenosyl-L-methionine-binding positions include 108–109 (RD), 124–125 (ER), and aspartate 178.

Belongs to the methyltransferase superfamily. RsmJ family.

Its subcellular location is the cytoplasm. It carries out the reaction guanosine(1516) in 16S rRNA + S-adenosyl-L-methionine = N(2)-methylguanosine(1516) in 16S rRNA + S-adenosyl-L-homocysteine + H(+). Specifically methylates the guanosine in position 1516 of 16S rRNA. In Idiomarina loihiensis (strain ATCC BAA-735 / DSM 15497 / L2-TR), this protein is Ribosomal RNA small subunit methyltransferase J.